The sequence spans 118 residues: Succinate dehydrogenase assembly factor 1, mitochondrial (118 aa).

An LYR motif 1; required for interaction with HSC20 motif is present at residues 14–16 (LYR). The LYR motif 2; not required for interaction with HSC20 signature appears at 53–55 (LYR). An interaction with SDHB region spans residues 53 to 65 (LYRRGRRQLQMLR). The segment at 72–118 (MGAFVRTRGPTEESNGAGAPGTLSGEGDDPRKPLDSMRTPKTPLDGR) is disordered.

The protein belongs to the complex I LYR family. SDHAF1 subfamily. Interacts with SDHB within an SDHA-SDHB subcomplex. Also interacts with the iron-sulfur transfer complex formed by HSC20, HSPA9 and ISCU through direct binding to HSC20. Binding of SDHAF1 to SDHB precedes and is necessary for recruitment of the iron-sulfur transfer complex by SDHAF1.

It is found in the mitochondrion matrix. Plays an essential role in the assembly of succinate dehydrogenase (SDH), an enzyme complex (also referred to as respiratory complex II) that is a component of both the tricarboxylic acid (TCA) cycle and the mitochondrial electron transport chain, and which couples the oxidation of succinate to fumarate with the reduction of ubiquinone (coenzyme Q) to ubiquinol. Promotes maturation of the iron-sulfur protein subunit SDHB of the SDH catalytic dimer, protecting it from the deleterious effects of oxidants. May act together with SDHAF3. Contributes to iron-sulfur cluster incorporation into SDHB by binding to SDHB and recruiting the iron-sulfur transfer complex formed by HSC20, HSPA9 and ISCU through direct binding to HSC20. The sequence is that of Succinate dehydrogenase assembly factor 1, mitochondrial from Bos taurus (Bovine).